We begin with the raw amino-acid sequence, 473 residues long: ATP synthase subunit beta (473 aa).

Position 158 to 165 (158 to 165 (GGAGVGKT)) interacts with ATP.

The protein belongs to the ATPase alpha/beta chains family. As to quaternary structure, F-type ATPases have 2 components, CF(1) - the catalytic core - and CF(0) - the membrane proton channel. CF(1) has five subunits: alpha(3), beta(3), gamma(1), delta(1), epsilon(1). CF(0) has three main subunits: a(1), b(2) and c(9-12). The alpha and beta chains form an alternating ring which encloses part of the gamma chain. CF(1) is attached to CF(0) by a central stalk formed by the gamma and epsilon chains, while a peripheral stalk is formed by the delta and b chains.

The protein resides in the cell membrane. The catalysed reaction is ATP + H2O + 4 H(+)(in) = ADP + phosphate + 5 H(+)(out). Functionally, produces ATP from ADP in the presence of a proton gradient across the membrane. The catalytic sites are hosted primarily by the beta subunits. The polypeptide is ATP synthase subunit beta (Anoxybacillus flavithermus (strain DSM 21510 / WK1)).